An 807-amino-acid chain; its full sequence is Glycerol-3-phosphate acyltransferase (807 aa).

The short motif at 308 to 313 is the HXXXXD motif element; it reads CHRSHM.

It belongs to the GPAT/DAPAT family.

It is found in the cell inner membrane. It carries out the reaction sn-glycerol 3-phosphate + an acyl-CoA = a 1-acyl-sn-glycero-3-phosphate + CoA. Its pathway is phospholipid metabolism; CDP-diacylglycerol biosynthesis; CDP-diacylglycerol from sn-glycerol 3-phosphate: step 1/3. The sequence is that of Glycerol-3-phosphate acyltransferase from Shewanella loihica (strain ATCC BAA-1088 / PV-4).